The sequence spans 401 residues: Acetate kinase (401 aa).

Asn7 lines the Mg(2+) pocket. ATP is bound at residue Lys14. Residue Arg90 coordinates substrate. Residue Asp147 is the Proton donor/acceptor of the active site. ATP is bound by residues 207–211, 282–284, and 330–334; these read HLGNG, DFR, and GVGEN. Glu383 contributes to the Mg(2+) binding site.

This sequence belongs to the acetokinase family. In terms of assembly, homodimer. Mg(2+) is required as a cofactor. Mn(2+) serves as cofactor.

It is found in the cytoplasm. The catalysed reaction is acetate + ATP = acetyl phosphate + ADP. Its pathway is metabolic intermediate biosynthesis; acetyl-CoA biosynthesis; acetyl-CoA from acetate: step 1/2. Catalyzes the formation of acetyl phosphate from acetate and ATP. Can also catalyze the reverse reaction. This is Acetate kinase from Clostridium novyi (strain NT).